A 265-amino-acid polypeptide reads, in one-letter code: Hydroxyethylthiazole kinase (265 aa).

M55 contributes to the substrate binding site. ATP is bound by residues R130 and S176. A substrate-binding site is contributed by G203.

Belongs to the Thz kinase family. The cofactor is Mg(2+).

The enzyme catalyses 5-(2-hydroxyethyl)-4-methylthiazole + ATP = 4-methyl-5-(2-phosphooxyethyl)-thiazole + ADP + H(+). It participates in cofactor biosynthesis; thiamine diphosphate biosynthesis; 4-methyl-5-(2-phosphoethyl)-thiazole from 5-(2-hydroxyethyl)-4-methylthiazole: step 1/1. Catalyzes the phosphorylation of the hydroxyl group of 4-methyl-5-beta-hydroxyethylthiazole (THZ). This is Hydroxyethylthiazole kinase from Leptospira interrogans serogroup Icterohaemorrhagiae serovar Lai (strain 56601).